Reading from the N-terminus, the 557-residue chain is Formate--tetrahydrofolate ligase (557 aa).

44-51 (TPLGEGKS) contributes to the ATP binding site.

The protein belongs to the formate--tetrahydrofolate ligase family.

The enzyme catalyses (6S)-5,6,7,8-tetrahydrofolate + formate + ATP = (6R)-10-formyltetrahydrofolate + ADP + phosphate. It participates in one-carbon metabolism; tetrahydrofolate interconversion. This Desulfotalea psychrophila (strain LSv54 / DSM 12343) protein is Formate--tetrahydrofolate ligase.